Reading from the N-terminus, the 267-residue chain is 4-hydroxy-tetrahydrodipicolinate reductase (267 aa).

NAD(+) contacts are provided by residues 10–15 (GCGGRM) and Glu36. NADP(+) is bound at residue Arg37. NAD(+)-binding positions include 99–101 (GTT) and 123–126 (APNF). His156 (proton donor/acceptor) is an active-site residue. (S)-2,3,4,5-tetrahydrodipicolinate is bound at residue His157. Lys160 functions as the Proton donor in the catalytic mechanism. 166–167 (GT) is a (S)-2,3,4,5-tetrahydrodipicolinate binding site.

The protein belongs to the DapB family.

It localises to the cytoplasm. The catalysed reaction is (S)-2,3,4,5-tetrahydrodipicolinate + NAD(+) + H2O = (2S,4S)-4-hydroxy-2,3,4,5-tetrahydrodipicolinate + NADH + H(+). It catalyses the reaction (S)-2,3,4,5-tetrahydrodipicolinate + NADP(+) + H2O = (2S,4S)-4-hydroxy-2,3,4,5-tetrahydrodipicolinate + NADPH + H(+). Its pathway is amino-acid biosynthesis; L-lysine biosynthesis via DAP pathway; (S)-tetrahydrodipicolinate from L-aspartate: step 4/4. In terms of biological role, catalyzes the conversion of 4-hydroxy-tetrahydrodipicolinate (HTPA) to tetrahydrodipicolinate. The polypeptide is 4-hydroxy-tetrahydrodipicolinate reductase (Laribacter hongkongensis (strain HLHK9)).